The chain runs to 296 residues: UDP-N-acetylenolpyruvoylglucosamine reductase (296 aa).

The 172-residue stretch at 18–189 (LGGRALAEVR…TGADIVLRRG (172 aa)) folds into the FAD-binding PCMH-type domain. Residue arginine 166 is part of the active site. Cysteine 218 functions as the Proton donor in the catalytic mechanism. Glutamate 289 is a catalytic residue.

Belongs to the MurB family. It depends on FAD as a cofactor.

The protein resides in the cytoplasm. The catalysed reaction is UDP-N-acetyl-alpha-D-muramate + NADP(+) = UDP-N-acetyl-3-O-(1-carboxyvinyl)-alpha-D-glucosamine + NADPH + H(+). The protein operates within cell wall biogenesis; peptidoglycan biosynthesis. Cell wall formation. In Nitratidesulfovibrio vulgaris (strain ATCC 29579 / DSM 644 / CCUG 34227 / NCIMB 8303 / VKM B-1760 / Hildenborough) (Desulfovibrio vulgaris), this protein is UDP-N-acetylenolpyruvoylglucosamine reductase.